The sequence spans 286 residues: Elongation factor Ts (286 aa).

The tract at residues 82–85 is involved in Mg(2+) ion dislocation from EF-Tu; that stretch reads TDFV.

This sequence belongs to the EF-Ts family.

The protein localises to the cytoplasm. In terms of biological role, associates with the EF-Tu.GDP complex and induces the exchange of GDP to GTP. It remains bound to the aminoacyl-tRNA.EF-Tu.GTP complex up to the GTP hydrolysis stage on the ribosome. The protein is Elongation factor Ts of Hamiltonella defensa subsp. Acyrthosiphon pisum (strain 5AT).